We begin with the raw amino-acid sequence, 330 residues long: Ketol-acid reductoisomerase (NADP(+)) (330 aa).

The KARI N-terminal Rossmann domain maps to 2 to 182 (VETFYEKDAD…GCTRAGVIKT (181 aa)). NADP(+)-binding positions include 25–28 (YGSQ), Lys-48, Ser-51, Ser-53, and 83–86 (DEVQ). His-108 is an active-site residue. Gly-134 lines the NADP(+) pocket. Residues 183-328 (TFKEETETDL…EKLRAMMPWI (146 aa)) enclose the KARI C-terminal knotted domain. Mg(2+)-binding residues include Asp-191, Glu-195, Glu-227, and Glu-231. Position 252 (Ser-252) interacts with substrate.

This sequence belongs to the ketol-acid reductoisomerase family. Mg(2+) is required as a cofactor.

It catalyses the reaction (2R)-2,3-dihydroxy-3-methylbutanoate + NADP(+) = (2S)-2-acetolactate + NADPH + H(+). The enzyme catalyses (2R,3R)-2,3-dihydroxy-3-methylpentanoate + NADP(+) = (S)-2-ethyl-2-hydroxy-3-oxobutanoate + NADPH + H(+). It participates in amino-acid biosynthesis; L-isoleucine biosynthesis; L-isoleucine from 2-oxobutanoate: step 2/4. The protein operates within amino-acid biosynthesis; L-valine biosynthesis; L-valine from pyruvate: step 2/4. Functionally, involved in the biosynthesis of branched-chain amino acids (BCAA). Catalyzes an alkyl-migration followed by a ketol-acid reduction of (S)-2-acetolactate (S2AL) to yield (R)-2,3-dihydroxy-isovalerate. In the isomerase reaction, S2AL is rearranged via a Mg-dependent methyl migration to produce 3-hydroxy-3-methyl-2-ketobutyrate (HMKB). In the reductase reaction, this 2-ketoacid undergoes a metal-dependent reduction by NADPH to yield (R)-2,3-dihydroxy-isovalerate. The polypeptide is Ketol-acid reductoisomerase (NADP(+)) (Petrotoga mobilis (strain DSM 10674 / SJ95)).